Consider the following 77-residue polypeptide: MGLCFPCPAESAPPSPSPEEKREKLAEAAERRQKEAATRGILDIQSVEAKKKKKEQLEKQMATSGPPTAGGLRWTVS.

The interval 1–77 (MGLCFPCPAE…TAGGLRWTVS (77 aa)) is disordered. A lipid anchor (N-myristoyl glycine) is attached at Gly2. S-palmitoyl cysteine attachment occurs at residues Cys4 and Cys7. Basic and acidic residues predominate over residues 18-37 (PEEKREKLAEAAERRQKEAA). The segment at 21 to 33 (KREKLAEAAERRQ) is VCP/p97-interacting motif (VIM). A Phosphoserine modification is found at Ser46.

Belongs to the SVIP family. Interacts (via VIM motif) with VCP/p97. Forms a complex with VCP/p97 and DERL1. Highly expressed in the medulla spinalis, adrenal gland, cerebrum, cerebellum, and sciatic nerve.

Its subcellular location is the membrane. It localises to the smooth endoplasmic reticulum membrane. The protein resides in the golgi apparatus membrane. The protein localises to the cell membrane. It is found in the lysosome membrane. Negative regulator of the ER-associated degradation pathway (ERAD) of misfolded proteins. It competes with AMFR/gp78 for binding VCP/p97, and inhibits AMFR/gp78-VCP/p97 complex formation that is required for degradation of ERAD substrates. Involved in the regulation of adrenal cortisol and dehydroepiandrosterone (DHEA) biosynthesis. The sequence is that of Small VCP/p97-interacting protein (Svip) from Mus musculus (Mouse).